Consider the following 217-residue polypeptide: MLVLKLTGRIFDEEDLVAKYAAIIRRIGGKVAVVTGGGEVARRYIAMARKGGASNTFQDLLGIYASRLNALLLISLIGDDAYPKAPSTVEEFLDAWRRHRVVVAGGFQPGQSTATVAALVAEAAGASVLLNAANIDAVYDDDPRRNPNARKIPTLTYDELERILKTSVVPGGYELVDPWSISILRRNCVTTYIFDGRRPEYVEEILRGGNPGSKITC.

Position 5 to 9 (5 to 9) interacts with ATP; the sequence is KLTGR. G37 contributes to the UMP binding site. Positions 38 and 42 each coordinate ATP. Residues D59 and 107–113 each bind UMP; that span reads FQPGQST. ATP is bound by residues N134, Y139, and D142.

It belongs to the UMP kinase family. In terms of assembly, homohexamer.

It localises to the cytoplasm. The enzyme catalyses UMP + ATP = UDP + ADP. The protein operates within pyrimidine metabolism; CTP biosynthesis via de novo pathway; UDP from UMP (UMPK route): step 1/1. With respect to regulation, inhibited by UTP. Its function is as follows. Catalyzes the reversible phosphorylation of UMP to UDP. The chain is Uridylate kinase from Pyrobaculum calidifontis (strain DSM 21063 / JCM 11548 / VA1).